The primary structure comprises 533 residues: tRNA(Ile)-lysidine synthase (533 aa).

27 to 32 (SGGSDS) is an ATP binding site.

This sequence belongs to the tRNA(Ile)-lysidine synthase family.

It localises to the cytoplasm. The enzyme catalyses cytidine(34) in tRNA(Ile2) + L-lysine + ATP = lysidine(34) in tRNA(Ile2) + AMP + diphosphate + H(+). Ligates lysine onto the cytidine present at position 34 of the AUA codon-specific tRNA(Ile) that contains the anticodon CAU, in an ATP-dependent manner. Cytidine is converted to lysidine, thus changing the amino acid specificity of the tRNA from methionine to isoleucine. The polypeptide is tRNA(Ile)-lysidine synthase (Rickettsia peacockii (strain Rustic)).